A 230-amino-acid chain; its full sequence is Flagellar L-ring protein (230 aa).

The first 15 residues, 1–15 (MSRLPSLSRLCLAIA), serve as a signal peptide directing secretion. Cysteine 16 carries the N-palmitoyl cysteine lipid modification. A lipid anchor (S-diacylglycerol cysteine) is attached at cysteine 16.

Belongs to the FlgH family. As to quaternary structure, the basal body constitutes a major portion of the flagellar organelle and consists of four rings (L,P,S, and M) mounted on a central rod.

It localises to the cell outer membrane. It is found in the bacterial flagellum basal body. Functionally, assembles around the rod to form the L-ring and probably protects the motor/basal body from shearing forces during rotation. In Xanthomonas euvesicatoria pv. vesicatoria (strain 85-10) (Xanthomonas campestris pv. vesicatoria), this protein is Flagellar L-ring protein.